Reading from the N-terminus, the 191-residue chain is MEYFDMRKMSVNLWRNAAGETREICTFPPAKRDFYWRASIASIAANGEFSLFPGMERIVTLLEGGEMFLESADRFNHTLKPLQPFAFAADQVVKAKLTAGQMSMDFNIMTRLDVCKAKVRIAERTFTTFGSRGGVVFVINGAWQLGDKLLTTDQGACWFDGRHTLRLLQPQGKLLFSEINWLAGHSPDQVQ.

It belongs to the Ves family.

This is Protein Ves from Escherichia coli (strain SE11).